The primary structure comprises 303 residues: UDP-3-O-acyl-N-acetylglucosamine deacetylase (303 aa).

The Zn(2+) site is built by His-78, His-237, and Asp-241. The active-site Proton donor is the His-264.

It belongs to the LpxC family. It depends on Zn(2+) as a cofactor.

The enzyme catalyses a UDP-3-O-[(3R)-3-hydroxyacyl]-N-acetyl-alpha-D-glucosamine + H2O = a UDP-3-O-[(3R)-3-hydroxyacyl]-alpha-D-glucosamine + acetate. It participates in glycolipid biosynthesis; lipid IV(A) biosynthesis; lipid IV(A) from (3R)-3-hydroxytetradecanoyl-[acyl-carrier-protein] and UDP-N-acetyl-alpha-D-glucosamine: step 2/6. Functionally, catalyzes the hydrolysis of UDP-3-O-myristoyl-N-acetylglucosamine to form UDP-3-O-myristoylglucosamine and acetate, the committed step in lipid A biosynthesis. The sequence is that of UDP-3-O-acyl-N-acetylglucosamine deacetylase from Pseudomonas putida (strain GB-1).